A 431-amino-acid chain; its full sequence is GTPase Obg (431 aa).

Residues 1 to 158 (MFVDQVKVDV…LTIRMELKVL (158 aa)) form the Obg domain. Positions 159–335 (ADVGLVGFPS…LLAKTADLLD (177 aa)) constitute an OBG-type G domain. Residues 165-172 (GFPSVGKS), 190-194 (FTTLV), 212-215 (DLPG), 282-285 (TKMD), and 316-318 (SSI) contribute to the GTP site. Mg(2+)-binding residues include serine 172 and threonine 192. The 79-residue stretch at 353–431 (YTTEADADFS…ILDYSFQFMD (79 aa)) folds into the OCT domain.

The protein belongs to the TRAFAC class OBG-HflX-like GTPase superfamily. OBG GTPase family. In terms of assembly, monomer. Mg(2+) is required as a cofactor.

The protein localises to the cytoplasm. An essential GTPase which binds GTP, GDP and possibly (p)ppGpp with moderate affinity, with high nucleotide exchange rates and a fairly low GTP hydrolysis rate. Plays a role in control of the cell cycle, stress response, ribosome biogenesis and in those bacteria that undergo differentiation, in morphogenesis control. The polypeptide is GTPase Obg (Lactiplantibacillus plantarum (strain ATCC BAA-793 / NCIMB 8826 / WCFS1) (Lactobacillus plantarum)).